Reading from the N-terminus, the 217-residue chain is Probable transaldolase (217 aa).

Residue Lys83 is the Schiff-base intermediate with substrate of the active site.

The protein belongs to the transaldolase family. Type 3B subfamily.

It localises to the cytoplasm. The catalysed reaction is D-sedoheptulose 7-phosphate + D-glyceraldehyde 3-phosphate = D-erythrose 4-phosphate + beta-D-fructose 6-phosphate. Its pathway is carbohydrate degradation; pentose phosphate pathway; D-glyceraldehyde 3-phosphate and beta-D-fructose 6-phosphate from D-ribose 5-phosphate and D-xylulose 5-phosphate (non-oxidative stage): step 2/3. Transaldolase is important for the balance of metabolites in the pentose-phosphate pathway. The sequence is that of Probable transaldolase from Clostridium botulinum (strain Okra / Type B1).